The primary structure comprises 252 residues: Cell division protein ZapD (252 aa).

It belongs to the ZapD family. As to quaternary structure, interacts with FtsZ.

It localises to the cytoplasm. Functionally, cell division factor that enhances FtsZ-ring assembly. Directly interacts with FtsZ and promotes bundling of FtsZ protofilaments, with a reduction in FtsZ GTPase activity. The chain is Cell division protein ZapD from Cupriavidus taiwanensis (strain DSM 17343 / BCRC 17206 / CCUG 44338 / CIP 107171 / LMG 19424 / R1) (Ralstonia taiwanensis (strain LMG 19424)).